We begin with the raw amino-acid sequence, 266 residues long: Integral membrane protein 2B (266 aa).

Residues 1-54 lie on the Cytoplasmic side of the membrane; that stretch reads MVKVTFNSALAQKEAKKDEPKSGEEALIIPPDAVAVDCKDPDDVVPVGQRRAWC. A helical; Signal-anchor for type II membrane protein transmembrane segment spans residues 55–75; that stretch reads WCMCFGLAFMLAGVILGGAYL. The Lumenal portion of the chain corresponds to 76–266; sequence YKYFALQPDD…KFAVETLICS (191 aa). The interval 102 to 134 is necessary for interaction with APP and inhibitor effects on APP processing; the sequence is EPSADAPAALYQTIEENIKIFEEEEVEFISVPV. Residues 137 to 231 form the BRICHOS domain; that stretch reads FADSDPANIV…LCHDKETYKL (95 aa). Cystine bridges form between Cys-164/Cys-223 and Cys-248/Cys-265. A glycan (N-linked (GlcNAc...) asparagine) is linked at Asn-170.

This sequence belongs to the ITM2 family. As to quaternary structure, homodimer; disulfide-linked. Interacts with SPPL2A and SPPL2B. Interacts with APP. Mature BRI2 (mBRI2) interacts with the APP amyloid-beta A4 protein; the interaction occurs at the cell surface and in the endocytic compartments and enable alpha- and beta-secretase-induced APP cleavage inhibition. Mature BRI2 (mBRI2) interacts with the APP C99; the interaction occurs in the endocytic compartments and enable gamma-secretase-induced C99 cleavage inhibition. May form heterodimers with Bri23 peptide and APP amyloid-beta protein 40. Interacts with ADAM7 in sperm; the interaction increases following capacitation. Post-translationally, the ectodomain C-terminal part of the imBRI2 is processed by furin producing a secreted Bri23 peptide and a mature BRI2, membrane form (mBRI2). The remaining part of the ectodomain of mBRI2 containing the BRICHOS domain is cleaved by ADAM10 and is secreted (BRI2C, soluble form). The membrane-bound N-terminal fragment (BRI2C, membrane form) is further proteolytically processed by SPPL2A and SPPL2B through regulated intramembrane proteolysis producing a secreted C-peptide and a BRI2 intracellular domain (BRI2 ICD) released in the cytosol. Shedding by ADAM10 facilitates intramembrane cleavage but is not absolutely required for BRI2 ICD generation. In terms of processing, glycosylation at Asn-170 is important for cell surface localization, but doesn't affect furin- and ADAM10-induced proteolytic processing. As to expression, ubiquitous. Expressed in brain.

The protein resides in the golgi apparatus membrane. It localises to the cell membrane. It is found in the endosome membrane. Its subcellular location is the secreted. Functionally, plays a regulatory role in the processing of the amyloid-beta A4 precursor protein (APP) and acts as an inhibitor of the amyloid-beta peptide aggregation and fibrils deposition. Plays a role in the induction of neurite outgrowth. Functions as a protease inhibitor by blocking access of secretases to APP cleavage sites. Its function is as follows. Mature BRI2 (mBRI2) functions as a modulator of the amyloid-beta A4 precursor protein (APP) processing leading to a strong reduction in the secretion of secretase-processed amyloid-beta protein 40 and amyloid-beta protein 42. Bri23 peptide prevents aggregation of APP amyloid-beta protein 42 into toxic oligomers. This is Integral membrane protein 2B (ITM2B) from Homo sapiens (Human).